The following is a 260-amino-acid chain: Methanethiol S-methyltransferase (260 aa).

The next 5 membrane-spanning stretches (helical) occupy residues 27–47 (CYLF…GIGV), 55–75 (PGIT…LFAA), 107–127 (CLVL…VWNV), 134–154 (GLLI…TFLI), and 196–216 (FLIA…FAIL).

Belongs to the nurim family.

The protein localises to the membrane. It carries out the reaction methanethiol + S-adenosyl-L-methionine = dimethyl sulfide + S-adenosyl-L-homocysteine + H(+). Its function is as follows. Catalyzes the methylation of methanethiol (MeSH) to yield dimethylsulphide (DMS). This chain is Methanethiol S-methyltransferase, found in Pseudomonas sp. (strain GM41(2012)).